The following is a 606-amino-acid chain: Mitogen-activated protein kinase kinase kinase 7 (606 aa).

The interval 1–300 (MSTASAASSS…FPGADEPLQY (300 aa)) is interaction with MAPK8IP1. In terms of domain architecture, Protein kinase spans 36 to 291 (IEVEEVVGRG…KIMTHLMRYF (256 aa)). ATP contacts are provided by residues 42–50 (VGRGAFGVV) and K63. A Glycyl lysine isopeptide (Lys-Gly) (interchain with G-Cter in ubiquitin) cross-link involves residue K72. D156 functions as the Proton acceptor in the catalytic mechanism. A Glycyl lysine isopeptide (Lys-Gly) (interchain with G-Cter in ubiquitin) cross-link involves residue K158. Phosphothreonine; by autocatalysis occurs at positions 184 and 187. S192 carries the post-translational modification Phosphoserine; by autocatalysis. Residue K209 forms a Glycyl lysine isopeptide (Lys-Gly) (interchain with G-Cter in ubiquitin) linkage. Disordered regions lie at residues 301-338 (PCQY…MEQV) and 354-391 (KNQA…MSAD). Residues 306 to 338 (DEGQSNSATSTGSFMDIASTNTSNKSDTNMEQV) are compositionally biased toward polar residues. Positions 361–375 (SDSGRLSLGASRGSS) are enriched in low complexity. 3 positions are modified to phosphoserine: S367, S389, and S439. The segment covering 443–452 (LTVTGTEPGQ) has biased composition (polar residues). The segment at 443–492 (LTVTGTEPGQVSSRSSSPSVRMITTSGPTSEKPARSLPWTPDDSTDTNGS) is disordered. Low complexity predominate over residues 453–463 (VSSRSSSPSVR). At S455 the chain carries Phosphoserine.

The protein belongs to the protein kinase superfamily. STE Ser/Thr protein kinase family. MAP kinase kinase kinase subfamily. As to quaternary structure, can form homodimer. Binds both upstream activators and downstream substrates in multimolecular complexes. Interacts with TAB1/MAP3K7IP1, TAB2/MAP3K7IP2 and TAB3/MAP3K7IP3. Identified in the TRIKA2 complex composed of MAP3K7/TAK1, TAB1/MAP3K7IP1 and TAB2/MAP3K7IP2. Interacts with PPM1L and PPM1B/PP2CB. Interaction with PP2A and PPP6C leads to its repressed activity. Interacts with TRAF6 and TAB1/MAP3K7IP1; during IL-1 signaling. Interacts with TAOK1 and TAOK2; interaction with TAOK2 interferes with MAP3K7 interaction with IKKA, thus preventing NF-kappa-B activation. Interacts with DYNC2I2 (via WD domains). Interacts with CYLD and RBCK1. Interacts with TGFBR1; induces MAP3K7/TAK1 activation by TRAF6. Interacts with MAPK8IP1 and SMAD6. Interacts with isoform 1 of VRK2. Interacts with DAB2; the interaction is induced by TGF-beta stimulation and may mediate TGF-beta stimulated JNK activation. Interacts with TRIM5. Part of a complex containing ITCH, NDFIP1 and MAP3K7. Interacts with PLEKHM1 (via N- and C-terminus). Found in a complex with SH3RF1, RAC2, MAP2K7/MKK7, MAPK8IP1/JIP1, MAPK8/JNK1 and MAPK9/JNK2. Interacts with SASH1. Interacts with RIPK1. Requires Mg(2+) as cofactor. Association with TAB1/MAP3K7IP1 promotes autophosphorylation at Ser-192 and subsequent activation. Association with TAB2/MAP3K7IP2, itself associated with free unanchored Lys-63 polyubiquitin chain, promotes autophosphorylation and subsequent activation of MAP3K7. Dephosphorylation at Ser-192 by PPM1B/PP2CB and at Thr-187 by PP2A and PPP6C leads to inactivation. Deubiquitinated by USP19; leading to negative regulation of TNF-alpha- and IL-1beta-triggered NF-kappa-B activation. Post-translationally, 'Lys-48'-linked polyubiquitination at Lys-72 is induced by TNFalpha, and leads to proteasomal degradation. Undergoes 'Lys-48'-linked polyubiquitination catalyzed by ITCH. 'Lys-63'-linked polyubiquitination at Lys-158 by TRIM8 does not lead to proteasomal degradation but contributes to autophosphorylation and activation. Deubiquitinated by CYLD, a protease that selectively cleaves 'Lys-63'-linked ubiquitin chains.

It localises to the cytoplasm. The protein resides in the cell membrane. The enzyme catalyses L-seryl-[protein] + ATP = O-phospho-L-seryl-[protein] + ADP + H(+). It carries out the reaction L-threonyl-[protein] + ATP = O-phospho-L-threonyl-[protein] + ADP + H(+). Activated by pro-inflammatory cytokines and in response to physical and chemical stresses, including osmotic stress, oxidative stress, arsenic and ultraviolet light irradiation. Activated by 'Lys-63'-linked polyubiquitination and by autophosphorylation. Association with TAB1/MAP3K7IP1 and TAB2/MAP3K7IP2 promotes activation through autophosphorylation, whereas PPM1B/PP2CB, PP2A and PPP6C dephosphorylation leads to inactivation. Ceramides are also able to activate MAP3K7/TAK1. Functionally, serine/threonine kinase which acts as an essential component of the MAP kinase signal transduction pathway. Plays an important role in the cascades of cellular responses evoked by changes in the environment. Mediates signal transduction of TRAF6, various cytokines including interleukin-1 (IL-1), transforming growth factor-beta (TGFB), TGFB-related factors like BMP2 and BMP4, toll-like receptors (TLR), tumor necrosis factor receptor CD40 and B-cell receptor (BCR). Once activated, acts as an upstream activator of the MKK/JNK signal transduction cascade and the p38 MAPK signal transduction cascade through the phosphorylation and activation of several MAP kinase kinases like MAP2K1/MEK1, MAP2K3/MKK3, MAP2K6/MKK6 and MAP2K7/MKK7. These MAP2Ks in turn activate p38 MAPKs and c-jun N-terminal kinases (JNKs); both p38 MAPK and JNK pathways control the transcription factors activator protein-1 (AP-1). Independently of MAP2Ks and p38 MAPKs, acts as a key activator of NF-kappa-B by promoting activation of the I-kappa-B-kinase (IKK) core complex. Mechanistically, recruited to polyubiquitin chains of RIPK2 and IKBKG/NEMO via TAB2/MAP3K7IP2 and TAB3/MAP3K7IP3, and catalyzes phosphorylation and activation of IKBKB/IKKB component of the IKK complex, leading to NF-kappa-B activation. In osmotic stress signaling, plays a major role in the activation of MAPK8/JNK1, but not that of NF-kappa-B. Promotes TRIM5 capsid-specific restriction activity. Phosphorylates RIPK1 at 'Ser-321' which positively regulates RIPK1 interaction with RIPK3 to promote necroptosis but negatively regulates RIPK1 kinase activity and its interaction with FADD to mediate apoptosis. Phosphorylates STING1 in response to cGAMP-activation, promoting association between STEEP1 and STING1 and STING1 translocation to COPII vesicles. The sequence is that of Mitogen-activated protein kinase kinase kinase 7 (Map3k7) from Rattus norvegicus (Rat).